Here is a 186-residue protein sequence, read N- to C-terminus: Ribosome-recycling factor (186 aa).

Belongs to the RRF family.

The protein localises to the cytoplasm. In terms of biological role, responsible for the release of ribosomes from messenger RNA at the termination of protein biosynthesis. May increase the efficiency of translation by recycling ribosomes from one round of translation to another. The polypeptide is Ribosome-recycling factor (Rickettsia felis (strain ATCC VR-1525 / URRWXCal2) (Rickettsia azadi)).